The chain runs to 284 residues: Homeobox protein six1 (284 aa).

The segment at residues 124–183 is a DNA-binding region (homeobox); sequence GEETSYCFKEKSRGVLREWYAHNPYPSPREKRELAEATGLTTTQVSNWFKNRRQRDRAAE. The tract at residues 168-230 is disordered; that stretch reads VSNWFKNRRQ…SPPQSPDQNS (63 aa). Positions 179–190 are enriched in basic and acidic residues; the sequence is DRAAEAKERENT. Positions 191–202 are enriched in low complexity; sequence ENNNTSTNKQNQ.

Belongs to the SIX/Sine oculis homeobox family.

Its subcellular location is the nucleus. The protein localises to the cytoplasm. Its function is as follows. Transcription factor that is involved in the regulation of cell proliferation, apoptosis and embryonic development. Depending on context, functions as a transcriptional repressor or activator. Required for the normal formation of pre-placodal ectoderm. The protein is Homeobox protein six1 (six1) of Xenopus laevis (African clawed frog).